Consider the following 158-residue polypeptide: Non-specific lipid transfer protein GPI-anchored 29 (158 aa).

Positions 1–24 (MAYFSTATSLLLLVLSVSSPYVHG) are cleaved as a signal peptide. Intrachain disulfides connect C28–C71, C38–C55, C56–C95, and C69–C105. A glycan (N-linked (GlcNAc...) asparagine) is linked at N84. The GPI-anchor amidated serine moiety is linked to residue S134. Positions 135 to 158 (KGNSLIPISGFSFVIVTALAMFRI) are cleaved as a propeptide — removed in mature form.

This sequence belongs to the plant LTP family. In terms of tissue distribution, confined to the ovaries of the inflorescence.

Its subcellular location is the secreted. The protein resides in the cell membrane. Probable lipid transfer protein. This is Non-specific lipid transfer protein GPI-anchored 29 from Arabidopsis thaliana (Mouse-ear cress).